A 258-amino-acid polypeptide reads, in one-letter code: NAD kinase (258 aa).

Asp-51 (proton acceptor) is an active-site residue. Residues 51–52 (DG), Arg-56, 119–120 (ND), Lys-130, Asp-149, 160–165 (TAYSLS), and Ala-184 contribute to the NAD(+) site.

This sequence belongs to the NAD kinase family. It depends on a divalent metal cation as a cofactor.

The protein localises to the cytoplasm. It carries out the reaction NAD(+) + ATP = ADP + NADP(+) + H(+). Functionally, involved in the regulation of the intracellular balance of NAD and NADP, and is a key enzyme in the biosynthesis of NADP. Catalyzes specifically the phosphorylation on 2'-hydroxyl of the adenosine moiety of NAD to yield NADP. This chain is NAD kinase, found in Thermotoga neapolitana (strain ATCC 49049 / DSM 4359 / NBRC 107923 / NS-E).